A 180-amino-acid polypeptide reads, in one-letter code: Acireductone dioxygenase (180 aa).

Residues His-97, His-99, Glu-103, and His-141 each contribute to the Fe(2+) site. The Ni(2+) site is built by His-97, His-99, Glu-103, and His-141.

The protein belongs to the acireductone dioxygenase (ARD) family. As to quaternary structure, monomer. Fe(2+) serves as cofactor. It depends on Ni(2+) as a cofactor.

The enzyme catalyses 1,2-dihydroxy-5-(methylsulfanyl)pent-1-en-3-one + O2 = 3-(methylsulfanyl)propanoate + CO + formate + 2 H(+). It carries out the reaction 1,2-dihydroxy-5-(methylsulfanyl)pent-1-en-3-one + O2 = 4-methylsulfanyl-2-oxobutanoate + formate + 2 H(+). It functions in the pathway amino-acid biosynthesis; L-methionine biosynthesis via salvage pathway; L-methionine from S-methyl-5-thio-alpha-D-ribose 1-phosphate: step 5/6. Functionally, catalyzes 2 different reactions between oxygen and the acireductone 1,2-dihydroxy-3-keto-5-methylthiopentene (DHK-MTPene) depending upon the metal bound in the active site. Fe-containing acireductone dioxygenase (Fe-ARD) produces formate and 2-keto-4-methylthiobutyrate (KMTB), the alpha-ketoacid precursor of methionine in the methionine recycle pathway. Ni-containing acireductone dioxygenase (Ni-ARD) produces methylthiopropionate, carbon monoxide and formate, and does not lie on the methionine recycle pathway. The protein is Acireductone dioxygenase of Yersinia enterocolitica serotype O:8 / biotype 1B (strain NCTC 13174 / 8081).